The primary structure comprises 74 residues: Translation initiation factor IF-1 (74 aa).

Positions 1–72 (MGKEDVIRME…TRGRIVYRKK (72 aa)) constitute an S1-like domain.

This sequence belongs to the IF-1 family. As to quaternary structure, component of the 30S ribosomal translation pre-initiation complex which assembles on the 30S ribosome in the order IF-2 and IF-3, IF-1 and N-formylmethionyl-tRNA(fMet); mRNA recruitment can occur at any time during PIC assembly.

It is found in the cytoplasm. One of the essential components for the initiation of protein synthesis. Stabilizes the binding of IF-2 and IF-3 on the 30S subunit to which N-formylmethionyl-tRNA(fMet) subsequently binds. Helps modulate mRNA selection, yielding the 30S pre-initiation complex (PIC). Upon addition of the 50S ribosomal subunit IF-1, IF-2 and IF-3 are released leaving the mature 70S translation initiation complex. This chain is Translation initiation factor IF-1, found in Thermotoga petrophila (strain ATCC BAA-488 / DSM 13995 / JCM 10881 / RKU-1).